The following is a 390-amino-acid chain: MKILYCDCFAGIAGDMTVAALLDLGVPFEVVEGAVKQLPLPHSSYSLAVERTSRKGIAAARFVVHVEEHQPHRHYADIAAMIEESTLAEGVKEKAQRIFFRLAEAEAKVHGVEIGRVHFHEVGAVDSIVDIVGTAAALEWLGIDAVHAAPLPLGSGFVETAHGRLPVPAPATAELLRGLPIHGEAGSGERVTPTGAAILAALATGFGRAPAMTVTGVGCGAGTKDFDDIPNVMRLFMGEAEGGLLRDEVCIIETHIDDMNPEILGHVLERLMEAGALDAAFSPLQMKKNRPAVKLTVIARPGQRDELAALVLRETSAIGVRFYPASRLKLSREKEERPTSLGPVTVKVIRDGGRVVRVTPEYDACRRIAAEREMSLLEVYRIVEREAGEP.

Belongs to the LarC family.

The chain is Putative nickel insertion protein from Geobacter metallireducens (strain ATCC 53774 / DSM 7210 / GS-15).